A 147-amino-acid chain; its full sequence is Transcriptional regulator MraZ (147 aa).

SpoVT-AbrB domains follow at residues 5 to 51 (GTPV…PQPV) and 80 to 123 (ACDV…DSEK).

The protein belongs to the MraZ family. Forms oligomers.

It localises to the cytoplasm. It is found in the nucleoid. The chain is Transcriptional regulator MraZ from Nitrosospira multiformis (strain ATCC 25196 / NCIMB 11849 / C 71).